We begin with the raw amino-acid sequence, 349 residues long: Hyaluronidase Tab y 2.0101 (349 aa).

The N-terminal stretch at methionine 1 to lysine 25 is a signal peptide. Cystine bridges form between cysteine 37–cysteine 328 and cysteine 205–cysteine 216. 4 N-linked (GlcNAc...) asparagine glycosylation sites follow: asparagine 41, asparagine 81, asparagine 99, and asparagine 119. Catalysis depends on glutamate 129, which acts as the Proton donor. Residue asparagine 147 is glycosylated (N-linked (GlcNAc...) asparagine). Asparagine 251 and asparagine 297 each carry an N-linked (GlcNAc...) asparagine glycan.

This sequence belongs to the glycosyl hydrolase 56 family. Expressed in salivary glands.

It is found in the secreted. The catalysed reaction is Random hydrolysis of (1-&gt;4)-linkages between N-acetyl-beta-D-glucosamine and D-glucuronate residues in hyaluronate.. In terms of biological role, hydrolyzes high molecular weight hyaluronic acid to produce small oligosaccharides. This Tabanus yao (Horsefly) protein is Hyaluronidase Tab y 2.0101.